The chain runs to 373 residues: 3-isopropylmalate dehydrogenase (373 aa).

82–93 (GPKWGTGAVRPE) contacts NAD(+). Positions 100, 110, 139, and 231 each coordinate substrate. Aspartate 231 and aspartate 260 together coordinate Mg(2+). An NAD(+)-binding site is contributed by 295–306 (GSAPDLPENKVN).

Belongs to the isocitrate and isopropylmalate dehydrogenases family. In terms of assembly, homodimer. Mg(2+) serves as cofactor. Requires Mn(2+) as cofactor.

It is found in the cytoplasm. The enzyme catalyses (2R,3S)-3-isopropylmalate + NAD(+) = 4-methyl-2-oxopentanoate + CO2 + NADH. The protein operates within amino-acid biosynthesis; L-leucine biosynthesis; L-leucine from 3-methyl-2-oxobutanoate: step 3/4. In terms of biological role, catalyzes the oxidation of 3-carboxy-2-hydroxy-4-methylpentanoate (3-isopropylmalate) to 3-carboxy-4-methyl-2-oxopentanoate. The product decarboxylates to 4-methyl-2 oxopentanoate. The chain is 3-isopropylmalate dehydrogenase (LEU2) from Scheffersomyces stipitis (strain ATCC 58785 / CBS 6054 / NBRC 10063 / NRRL Y-11545) (Yeast).